A 51-amino-acid polypeptide reads, in one-letter code: Light-harvesting protein B800/850/890 beta-2 chain (51 aa).

Topologically, residues 1–17 (ADEMRNVSDEEAKEFHA) are cytoplasmic. His16 and His34 together coordinate a bacteriochlorophyll. Residues 18-40 (MFSQAFTVYVGVAVVAHILAWAW) traverse the membrane as a helical segment. At 41–51 (RPWIPGDEGFG) the chain is on the periplasmic side.

The protein belongs to the antenna complex beta subunit family. In terms of assembly, the core complex is formed by different alpha and beta chains, binding bacteriochlorophyll molecules, and arranged most probably in tetrameric structures disposed around the reaction center. The non-pigmented gamma chains may constitute additional components.

It localises to the cell inner membrane. In terms of biological role, antenna complexes are light-harvesting systems, which transfer the excitation energy to the reaction centers. This chain is Light-harvesting protein B800/850/890 beta-2 chain, found in Halorhodospira halophila (strain DSM 244 / SL1) (Ectothiorhodospira halophila (strain DSM 244 / SL1)).